The chain runs to 333 residues: Dehydrodolichyl diphosphate synthase complex subunit DHDDS (333 aa).

(2E,6E)-farnesyl diphosphate is bound by residues Asp34, Gly35, Arg37, Arg38, and Arg85. Residues Asp34, Gly35, Arg37, Arg38, Arg85, Arg205, Arg211, and Ser213 each contribute to the isopentenyl diphosphate site. Asp34 is a Mg(2+) binding site.

It belongs to the UPP synthase family. As to quaternary structure, the active dehydrodolichyl diphosphate synthase complex is a heterotetramer composed of a dimer of heterodimer of DHDDS and NUS1. Interacts with NPC2. Mg(2+) serves as cofactor. Ubiquitous. Expressed at high levels in testis and kidney. Expressed in epididymis (at protein level).

It localises to the endoplasmic reticulum membrane. The catalysed reaction is n isopentenyl diphosphate + (2E,6E)-farnesyl diphosphate = a di-trans,poly-cis-polyprenyl diphosphate + n diphosphate. It participates in protein modification; protein glycosylation. Its pathway is lipid metabolism. Activated by phospholipids including cardiolipin, phosphatidylcholine, phosphatidylethanolamine, phosphatidylinositol and phosphatidylserine. With NUS1, forms the dehydrodolichyl diphosphate synthase (DDS) complex, an essential component of the dolichol monophosphate (Dol-P) biosynthetic machinery. Both subunits contribute to enzymatic activity, i.e. condensation of multiple copies of isopentenyl pyrophosphate (IPP) to farnesyl pyrophosphate (FPP) to produce dehydrodolichyl diphosphate (Dedol-PP), a precursor of dolichol phosphate which is utilized as a sugar carrier in protein glycosylation in the endoplasmic reticulum (ER). Synthesizes long-chain polyprenols, mostly of C95 and C100 chain length. Regulates the glycosylation and stability of nascent NPC2, thereby promoting trafficking of LDL-derived cholesterol. The sequence is that of Dehydrodolichyl diphosphate synthase complex subunit DHDDS from Homo sapiens (Human).